A 99-amino-acid chain; its full sequence is NADH-quinone oxidoreductase subunit K (99 aa).

3 helical membrane-spanning segments follow: residues 3-23, 28-48, and 59-79; these read PANY…GVLL, IVMF…FVTF, and MIAF…LAII.

The protein belongs to the complex I subunit 4L family. NDH-1 is composed of 14 different subunits. Subunits NuoA, H, J, K, L, M, N constitute the membrane sector of the complex.

The protein localises to the cell membrane. The enzyme catalyses a quinone + NADH + 5 H(+)(in) = a quinol + NAD(+) + 4 H(+)(out). NDH-1 shuttles electrons from NADH, via FMN and iron-sulfur (Fe-S) centers, to quinones in the respiratory chain. The immediate electron acceptor for the enzyme in this species is believed to be a menaquinone. Couples the redox reaction to proton translocation (for every two electrons transferred, four hydrogen ions are translocated across the cytoplasmic membrane), and thus conserves the redox energy in a proton gradient. In Mycobacterium marinum (strain ATCC BAA-535 / M), this protein is NADH-quinone oxidoreductase subunit K.